Consider the following 158-residue polypeptide: Cyclic pyranopterin monophosphate synthase (158 aa).

Substrate-binding positions include Met74–His76 and Met112–Glu113. Residue Asp127 is part of the active site.

This sequence belongs to the MoaC family. As to quaternary structure, homohexamer; trimer of dimers.

The catalysed reaction is (8S)-3',8-cyclo-7,8-dihydroguanosine 5'-triphosphate = cyclic pyranopterin phosphate + diphosphate. Its pathway is cofactor biosynthesis; molybdopterin biosynthesis. Functionally, catalyzes the conversion of (8S)-3',8-cyclo-7,8-dihydroguanosine 5'-triphosphate to cyclic pyranopterin monophosphate (cPMP). The polypeptide is Cyclic pyranopterin monophosphate synthase (Helicobacter pylori (strain G27)).